We begin with the raw amino-acid sequence, 213 residues long: Phosphatidylserine decarboxylase proenzyme (213 aa).

Ser183 functions as the Schiff-base intermediate with substrate; via pyruvic acid in the catalytic mechanism. At Ser183 the chain carries Pyruvic acid (Ser); by autocatalysis.

The protein belongs to the phosphatidylserine decarboxylase family. PSD-A subfamily. As to quaternary structure, heterodimer of a large membrane-associated beta subunit and a small pyruvoyl-containing alpha subunit. Pyruvate serves as cofactor. Post-translationally, is synthesized initially as an inactive proenzyme. Formation of the active enzyme involves a self-maturation process in which the active site pyruvoyl group is generated from an internal serine residue via an autocatalytic post-translational modification. Two non-identical subunits are generated from the proenzyme in this reaction, and the pyruvate is formed at the N-terminus of the alpha chain, which is derived from the carboxyl end of the proenzyme. The post-translation cleavage follows an unusual pathway, termed non-hydrolytic serinolysis, in which the side chain hydroxyl group of the serine supplies its oxygen atom to form the C-terminus of the beta chain, while the remainder of the serine residue undergoes an oxidative deamination to produce ammonia and the pyruvoyl prosthetic group on the alpha chain.

It is found in the cell membrane. The enzyme catalyses a 1,2-diacyl-sn-glycero-3-phospho-L-serine + H(+) = a 1,2-diacyl-sn-glycero-3-phosphoethanolamine + CO2. The protein operates within phospholipid metabolism; phosphatidylethanolamine biosynthesis; phosphatidylethanolamine from CDP-diacylglycerol: step 2/2. Its function is as follows. Catalyzes the formation of phosphatidylethanolamine (PtdEtn) from phosphatidylserine (PtdSer). The sequence is that of Phosphatidylserine decarboxylase proenzyme from Syntrophus aciditrophicus (strain SB).